The chain runs to 182 residues: CKLF-like MARVEL transmembrane domain-containing protein 3 (182 aa).

Positions 1-12 (MWPPDPDPDPDP) are enriched in acidic residues. The disordered stretch occupies residues 1-21 (MWPPDPDPDPDPEPAGGSRPG). One can recognise an MARVEL domain in the interval 36-155 (FLCSLKGRLL…DFYLIFNDVA (120 aa)). Transmembrane regions (helical) follow at residues 64 to 84 (ASAFLTAPLLEFLLALYFLFA), 101 to 121 (MDFLRCVTAALIYFAISITAI), and 131 to 151 (AAGVFGFFATIVFATDFYLIF).

This sequence belongs to the chemokine-like factor family. Expressed in the leukocytes, placenta and testis.

The protein localises to the membrane. This Homo sapiens (Human) protein is CKLF-like MARVEL transmembrane domain-containing protein 3 (CMTM3).